Consider the following 210-residue polypeptide: MTDQGIVKINASLRKNVGTGPSRALRLSGEIPAVIYGKGRDSLSISLSNREFVSKYRSAALSTHLIELEIDNKKEYVLMRDVQKHPVTDRIQHVDFQFIDYGTEIKIEVPLIFTNEQKCIGIKRGGVLNILHRTLSIKCSPKAILQNIEIDLSGLTTGHSIHVSDLKLPPEVNVTMKEHNPAIVTISSASTEKEAESNQESTSTTPSSES.

A disordered region spans residues 186–210; that stretch reads ISSASTEKEAESNQESTSTTPSSES. The segment covering 198 to 210 has biased composition (low complexity); sequence NQESTSTTPSSES.

This sequence belongs to the bacterial ribosomal protein bL25 family. CTC subfamily. In terms of assembly, part of the 50S ribosomal subunit; part of the 5S rRNA/L5/L18/L25 subcomplex. Contacts the 5S rRNA. Binds to the 5S rRNA independently of L5 and L18.

In terms of biological role, this is one of the proteins that binds to the 5S RNA in the ribosome where it forms part of the central protuberance. In Ehrlichia chaffeensis (strain ATCC CRL-10679 / Arkansas), this protein is Large ribosomal subunit protein bL25.